A 129-amino-acid chain; its full sequence is Protein NrdI (129 aa).

This sequence belongs to the NrdI family.

Functionally, probably involved in ribonucleotide reductase function. This is Protein NrdI from Macrococcus caseolyticus (strain JCSC5402) (Macrococcoides caseolyticum).